The sequence spans 200 residues: Urease accessory protein UreE (200 aa).

Residues 171–200 are disordered; the sequence is HHGHAHPHPHDHDHQHGPGCAHGRHGHDHH.

Belongs to the UreE family.

The protein localises to the cytoplasm. Its function is as follows. Involved in urease metallocenter assembly. Binds nickel. Probably functions as a nickel donor during metallocenter assembly. The protein is Urease accessory protein UreE of Burkholderia vietnamiensis (strain G4 / LMG 22486) (Burkholderia cepacia (strain R1808)).